Reading from the N-terminus, the 325-residue chain is Tetraacyldisaccharide 4'-kinase (325 aa).

51-58 contributes to the ATP binding site; sequence VVGGAGKT.

The protein belongs to the LpxK family.

It catalyses the reaction a lipid A disaccharide + ATP = a lipid IVA + ADP + H(+). It participates in glycolipid biosynthesis; lipid IV(A) biosynthesis; lipid IV(A) from (3R)-3-hydroxytetradecanoyl-[acyl-carrier-protein] and UDP-N-acetyl-alpha-D-glucosamine: step 6/6. In terms of biological role, transfers the gamma-phosphate of ATP to the 4'-position of a tetraacyldisaccharide 1-phosphate intermediate (termed DS-1-P) to form tetraacyldisaccharide 1,4'-bis-phosphate (lipid IVA). The polypeptide is Tetraacyldisaccharide 4'-kinase (Paramagnetospirillum magneticum (strain ATCC 700264 / AMB-1) (Magnetospirillum magneticum)).